Consider the following 107-residue polypeptide: Rhodocoxin (107 aa).

The 2Fe-2S ferredoxin-type domain maps to 2–106 (PTVTYVHPDG…GLIVRLPEEQ (105 aa)). [2Fe-2S] cluster is bound by residues Cys40, Cys46, Cys49, and Cys87.

It belongs to the adrenodoxin/putidaredoxin family. It depends on [2Fe-2S] cluster as a cofactor.

Its function is as follows. Ferredoxin-type protein which transfers electrons from rhodocoxin reductase to cytochrome CYP116 (ThcB), which is involved in the degradation of thiocarbamate herbicides. The polypeptide is Rhodocoxin (thcC) (Rhodococcus erythropolis (Arthrobacter picolinophilus)).